The sequence spans 189 residues: Orcokinin peptides (189 aa).

The N-terminal stretch at 1–21 (MRGAGGALAVAVAALLVCCSA) is a signal peptide. 2 propeptides span residues 22-124 (DPHQ…TFVK) and 145-174 (FYHL…PIGS).

This sequence belongs to the orcokinin family. Orcokinin-like peptide: Expressed in corpora cardiaca (CC), corpora allata (CA), antennal lobe (AL) and gnathal ganglion (GNG) (at protein level). Expression in CC, CA and GNG detected in some animals, in AL in few animals (at protein level). Orcokinin-like peptide precursor-related peptide: Expressed in corpora cardiaca (CC), corpora allata (CA), antennal lobe (AL) and gnathal ganglion (GNG) (at protein level). Expression in GNG detected in most animals, expression in CC, CA and AL detected in some animals (at protein level).

It is found in the secreted. Functionally, myotropic peptides. The chain is Orcokinin peptides from Agrotis ipsilon (Black cutworm moth).